The sequence spans 735 residues: Zinc finger CCCH domain-containing protein 14 (735 aa).

Met1 carries the post-translational modification N-acetylmethionine. The disordered stretch occupies residues 78-153 (TEPSSLKSPD…RHSYDDGAST (76 aa)). Ser85 is subject to Phosphoserine. Glycyl lysine isopeptide (Lys-Gly) (interchain with G-Cter in SUMO2) cross-links involve residues Lys99, Lys139, Lys175, and Lys198. The span at 131 to 144 (VSTSSQEQKSTNVR) shows a compositional bias: polar residues. A Phosphoserine modification is found at Ser240. Glycyl lysine isopeptide (Lys-Gly) (interchain with G-Cter in SUMO2) cross-links involve residues Lys245, Lys283, and Lys295. The interval 308–351 (FSHDGEEEEEDEDYGTRIGSLSSSVSVPAKPERRPSLPPSKQAN) is disordered. A phosphoserine mark is found at Ser309, Ser327, and Ser343. N6-acetyllysine; alternate is present on Lys357. Lys357 is covalently cross-linked (Glycyl lysine isopeptide (Lys-Gly) (interchain with G-Cter in SUMO2); alternate). Lys378 participates in a covalent cross-link: Glycyl lysine isopeptide (Lys-Gly) (interchain with G-Cter in SUMO2). Ser390 and Ser409 each carry phosphoserine. The segment at 399–431 (VQGQNRAPRISPPVKEEEAKGDNTGKSQGTQQR) is disordered. The span at 412–421 (VKEEEAKGDN) shows a compositional bias: basic and acidic residues. Lys413 participates in a covalent cross-link: Glycyl lysine isopeptide (Lys-Gly) (interchain with G-Cter in SUMO2). The span at 422-431 (TGKSQGTQQR) shows a compositional bias: polar residues. Lys489 participates in a covalent cross-link: Glycyl lysine isopeptide (Lys-Gly) (interchain with G-Cter in SUMO2). Ser498, Ser515, Ser527, and Ser620 each carry phosphoserine. 5 C3H1-type zinc fingers span residues 595–620 (EKLLERCKYWPACKNGDECVYHHPIS), 621–640 (PCKAFPNCKFAEKCLFVHPN), 641–656 (CKYDTKCTKADCPFTH), 681–698 (CRYFPACKKMECPFYHPK), and 700–718 (CRFNTQCTRPDCTFYHPTI).

Belongs to the ZC3H14 family. In terms of assembly, homodimer; facilitating circular RNAs (circRNAs) formation. Associates with the spliceosome. Interacts with HOOK2. Interacts with ZFC3H1 in a RNase-sensitive manner. As to expression, expressed in hippocampal pyramidal neurons (at protein level). Expressed in kidney, liver, muscle, heart brain and testes. Expressed in hippocampal pyramidal neurons.

It localises to the nucleus speckle. Functionally, RNA-binding protein involved in the biogenesis of circular RNAs (circRNAs), which are produced by back-splicing circularization of pre-mRNAs. Acts by binding to both exon-intron boundary and 3'-UTR of pre-mRNAs to promote circRNA biogenesis through dimerization and the association with the spliceosome. Required for spermatogenesis via involvement in circRNA biogenesis. Regulates the pre-mRNA processing of ATP5MC1; preventing its degradation. Also binds the poly(A) tail of mRNAs; controlling poly(A) length in neuronal cells. The chain is Zinc finger CCCH domain-containing protein 14 from Mus musculus (Mouse).